Reading from the N-terminus, the 476-residue chain is Bifunctional protein HldE (476 aa).

Positions Met-1 to Thr-318 are ribokinase. Asn-195–Glu-198 contributes to the ATP binding site. The active site involves Asp-264. The tract at residues Met-344 to Gly-476 is cytidylyltransferase.

This sequence in the N-terminal section; belongs to the carbohydrate kinase PfkB family. In the C-terminal section; belongs to the cytidylyltransferase family. In terms of assembly, homodimer.

The catalysed reaction is D-glycero-beta-D-manno-heptose 7-phosphate + ATP = D-glycero-beta-D-manno-heptose 1,7-bisphosphate + ADP + H(+). The enzyme catalyses D-glycero-beta-D-manno-heptose 1-phosphate + ATP + H(+) = ADP-D-glycero-beta-D-manno-heptose + diphosphate. It participates in nucleotide-sugar biosynthesis; ADP-L-glycero-beta-D-manno-heptose biosynthesis; ADP-L-glycero-beta-D-manno-heptose from D-glycero-beta-D-manno-heptose 7-phosphate: step 1/4. Its pathway is nucleotide-sugar biosynthesis; ADP-L-glycero-beta-D-manno-heptose biosynthesis; ADP-L-glycero-beta-D-manno-heptose from D-glycero-beta-D-manno-heptose 7-phosphate: step 3/4. It functions in the pathway bacterial outer membrane biogenesis; LPS core biosynthesis. In terms of biological role, catalyzes the phosphorylation of D-glycero-D-manno-heptose 7-phosphate at the C-1 position to selectively form D-glycero-beta-D-manno-heptose-1,7-bisphosphate. Its function is as follows. Catalyzes the ADP transfer from ATP to D-glycero-beta-D-manno-heptose 1-phosphate, yielding ADP-D-glycero-beta-D-manno-heptose. The chain is Bifunctional protein HldE from Vibrio parahaemolyticus serotype O3:K6 (strain RIMD 2210633).